The chain runs to 378 residues: Acetylornithine deacetylase (378 aa).

Residue His76 participates in Zn(2+) binding. Asp78 is a catalytic residue. Asp108 contributes to the Zn(2+) binding site. Glu140 is a catalytic residue. 3 residues coordinate Zn(2+): Glu141, Glu165, and His351.

This sequence belongs to the peptidase M20A family. ArgE subfamily. As to quaternary structure, homodimer. It depends on Zn(2+) as a cofactor. Requires Co(2+) as cofactor. The cofactor is glutathione.

It is found in the cytoplasm. It catalyses the reaction N(2)-acetyl-L-ornithine + H2O = L-ornithine + acetate. Its pathway is amino-acid biosynthesis; L-arginine biosynthesis; L-ornithine from N(2)-acetyl-L-ornithine (linear): step 1/1. Functionally, catalyzes the hydrolysis of the amide bond of N(2)-acetylated L-amino acids. Cleaves the acetyl group from N-acetyl-L-ornithine to form L-ornithine, an intermediate in L-arginine biosynthesis pathway, and a branchpoint in the synthesis of polyamines. The polypeptide is Acetylornithine deacetylase (Vibrio vulnificus (strain CMCP6)).